Consider the following 710-residue polypeptide: Assimilatory nitrate reductase catalytic subunit (710 aa).

The 4Fe-4S Mo/W bis-MGD-type domain maps to 19 to 77; it reads EKTYDTQCPFCSMQCKMQLVEQTIVTRKKYTAIGIDNPTTQGRLCIKGMNAHQHALNSS. Residues C26, C29, C33, and C63 each coordinate [4Fe-4S] cluster.

This sequence belongs to the prokaryotic molybdopterin-containing oxidoreductase family. [4Fe-4S] cluster serves as cofactor. The cofactor is Mo-bis(molybdopterin guanine dinucleotide).

Its pathway is nitrogen metabolism; nitrate reduction (denitrification); dinitrogen from nitrate: step 1/4. In terms of biological role, nitrate reductase is a key enzyme involved in the first step of nitrate assimilation in plants, fungi and bacteria. The polypeptide is Assimilatory nitrate reductase catalytic subunit (nasC) (Bacillus subtilis (strain 168)).